A 363-amino-acid chain; its full sequence is NudC domain-containing protein 3 (363 aa).

The tract at residues 120-143 is disordered; the sequence is AADLSGPQEVEKEEPPGSQDPEHT. The span at 128 to 143 shows a compositional bias: basic and acidic residues; sequence EVEKEEPPGSQDPEHT. The CS domain occupies 187–279; it reads AIRENYIWSQ…VGEYWWSAIL (93 aa). 2 positions are modified to phosphoserine: S342 and S357.

This Mus musculus (Mouse) protein is NudC domain-containing protein 3 (Nudcd3).